The following is an 80-amino-acid chain: Delta-actitoxin-Amc2a (80 aa).

A signal peptide spans 1 to 19 (MNKVLFLCLVVLCATSAFA). A propeptide spanning residues 20–30 (AEEEYVERAPV) is cleaved from the precursor. Intrachain disulfides connect Cys37–Cys73, Cys39–Cys65, and Cys55–Cys74. Pro56 carries the hydroxyproline modification.

Belongs to the sea anemone type 3 (BDS) potassium channel toxin family.

It localises to the secreted. Its subcellular location is the nematocyst. Neurotoxon that induces paralysis when injected into crabs. This is Delta-actitoxin-Amc2a from Antheopsis maculata (Sea anemone).